The sequence spans 178 residues: Large ribosomal subunit protein uL6 (178 aa).

This sequence belongs to the universal ribosomal protein uL6 family. In terms of assembly, part of the 50S ribosomal subunit.

Its function is as follows. This protein binds to the 23S rRNA, and is important in its secondary structure. It is located near the subunit interface in the base of the L7/L12 stalk, and near the tRNA binding site of the peptidyltransferase center. The chain is Large ribosomal subunit protein uL6 from Helicobacter pylori (strain HPAG1).